Consider the following 397-residue polypeptide: MSKTIAINAGSSSLKWQLYEMPEEKVVAKGIIERIGLKDSISTVKFDDKKDEQILDIVDHTQAVKILLEDLTKHGIIKDFNEITGVGHRVVAGGEYFKESALVDDKVVEQVEELSALAPLHNPAAAAGIRAFREILPDITSVCVFDTAFHTTMQPHTYLYPIPQKYYTDYKVRKYGAHGTSHQYVAQEAAKQLGRPLEELKLITAHVGNGVSITANYHGQSIDTSMGFTPLAGPMMGTRSGDIDPAIIPYLVANDPELEDAAAVVNMLNKQSGLLGVSGTSSDMRDIEAGLQSKDPNAVLAYNVFIDRIKKFIGQYLAVLNGADAIIFTAGMGENAPLMRQDVIAGLSWFGIELDPEKNVFGYFGDITKPDSKVKVLVIPTDEELMIARDVERLKAK.

Asn-8 contacts Mg(2+). ATP is bound at residue Lys-15. Arg-89 contributes to the substrate binding site. Residue Asp-146 is the Proton donor/acceptor of the active site. ATP-binding positions include 206 to 210 (HVGNG), 283 to 285 (DMR), and 331 to 335 (GMGEN). Residue Glu-383 participates in Mg(2+) binding.

It belongs to the acetokinase family. Homodimer. Requires Mg(2+) as cofactor. The cofactor is Mn(2+).

It localises to the cytoplasm. It carries out the reaction acetate + ATP = acetyl phosphate + ADP. The protein operates within metabolic intermediate biosynthesis; acetyl-CoA biosynthesis; acetyl-CoA from acetate: step 1/2. In terms of biological role, catalyzes the formation of acetyl phosphate from acetate and ATP. Can also catalyze the reverse reaction. This is Acetate kinase from Streptococcus agalactiae serotype Ia (strain ATCC 27591 / A909 / CDC SS700).